A 373-amino-acid chain; its full sequence is Spermidine/putrescine import ATP-binding protein PotA (373 aa).

The ABC transporter domain maps to 8–238 (FELRGVSKYF…PANLYVARFV (231 aa)). Residue 40 to 47 (GPSGCGKT) coordinates ATP.

The protein belongs to the ABC transporter superfamily. Spermidine/putrescine importer (TC 3.A.1.11.1) family. In terms of assembly, the complex is composed of two ATP-binding proteins (PotA), two transmembrane proteins (PotB and PotC) and a solute-binding protein (PotD).

The protein localises to the cell inner membrane. It catalyses the reaction ATP + H2O + polyamine-[polyamine-binding protein]Side 1 = ADP + phosphate + polyamineSide 2 + [polyamine-binding protein]Side 1.. Its function is as follows. Part of the ABC transporter complex PotABCD involved in spermidine/putrescine import. Responsible for energy coupling to the transport system. The chain is Spermidine/putrescine import ATP-binding protein PotA from Oleidesulfovibrio alaskensis (strain ATCC BAA-1058 / DSM 17464 / G20) (Desulfovibrio alaskensis).